We begin with the raw amino-acid sequence, 311 residues long: Cytochrome c biogenesis protein CcsA (311 aa).

Helical transmembrane passes span 11 to 31 (VLLLGLMAFGALLLALPLAFW), 44 to 64 (VVQLLVVAANLLLTAQLLWRW), 68 to 88 (GHFPISNLYESLCFLAWGCTF), 101 to 121 (LVPAATTPMALVCVAFASFAL), 146 to 166 (VIMMSYAALLVGSLLSAAVLF), 217 to 237 (TITVGFLLLTVGIISGAVWAN), 251 to 268 (TWALICWLVYAAYLHTRL), and 280 to 300 (VAVSGLFVISVCYIGVNLLGI).

The protein belongs to the CcmF/CycK/Ccl1/NrfE/CcsA family. As to quaternary structure, may interact with ccs1.

The protein resides in the cellular thylakoid membrane. In terms of biological role, required during biogenesis of c-type cytochromes (cytochrome c6 and cytochrome f) at the step of heme attachment. In Synechococcus sp. (strain RCC307), this protein is Cytochrome c biogenesis protein CcsA.